The following is a 690-amino-acid chain: Protease 2 (690 aa).

Active-site charge relay system residues include serine 534, aspartate 619, and histidine 654.

This sequence belongs to the peptidase S9A family.

It carries out the reaction Hydrolysis of -Arg-|-Xaa- and -Lys-|-Xaa- bonds in oligopeptides, even when P1' residue is proline.. In terms of biological role, cleaves peptide bonds on the C-terminal side of lysyl and argininyl residues. In Moraxella lacunata, this protein is Protease 2 (ptrB).